The chain runs to 492 residues: Glutamyl-tRNA(Gln) amidotransferase subunit A (492 aa).

Active-site charge relay system residues include Lys79 and Ser154. Catalysis depends on Ser178, which acts as the Acyl-ester intermediate.

This sequence belongs to the amidase family. GatA subfamily. Heterotrimer of A, B and C subunits.

The catalysed reaction is L-glutamyl-tRNA(Gln) + L-glutamine + ATP + H2O = L-glutaminyl-tRNA(Gln) + L-glutamate + ADP + phosphate + H(+). Its function is as follows. Allows the formation of correctly charged Gln-tRNA(Gln) through the transamidation of misacylated Glu-tRNA(Gln) in organisms which lack glutaminyl-tRNA synthetase. The reaction takes place in the presence of glutamine and ATP through an activated gamma-phospho-Glu-tRNA(Gln). In Desulforudis audaxviator (strain MP104C), this protein is Glutamyl-tRNA(Gln) amidotransferase subunit A.